Consider the following 702-residue polypeptide: Phosphoribosylformylglycinamidine synthase subunit PurL (702 aa).

His-36 is an active-site residue. Residues Tyr-39 and Lys-80 each contribute to the ATP site. Glu-82 serves as a coordination point for Mg(2+). Residues 83–86 and Arg-105 each bind substrate; that span reads SHNH. The active-site Proton acceptor is the His-84. Asp-106 contacts Mg(2+). Gln-225 is a substrate binding site. Asp-251 contributes to the Mg(2+) binding site. 293-295 is a substrate binding site; it reads ETQ. Residues Asp-468 and Gly-505 each coordinate ATP. Ser-508 is a binding site for substrate.

This sequence belongs to the FGAMS family. In terms of assembly, monomer. Part of the FGAM synthase complex composed of 1 PurL, 1 PurQ and 2 PurS subunits.

The protein localises to the cytoplasm. The enzyme catalyses N(2)-formyl-N(1)-(5-phospho-beta-D-ribosyl)glycinamide + L-glutamine + ATP + H2O = 2-formamido-N(1)-(5-O-phospho-beta-D-ribosyl)acetamidine + L-glutamate + ADP + phosphate + H(+). Its pathway is purine metabolism; IMP biosynthesis via de novo pathway; 5-amino-1-(5-phospho-D-ribosyl)imidazole from N(2)-formyl-N(1)-(5-phospho-D-ribosyl)glycinamide: step 1/2. In terms of biological role, part of the phosphoribosylformylglycinamidine synthase complex involved in the purines biosynthetic pathway. Catalyzes the ATP-dependent conversion of formylglycinamide ribonucleotide (FGAR) and glutamine to yield formylglycinamidine ribonucleotide (FGAM) and glutamate. The FGAM synthase complex is composed of three subunits. PurQ produces an ammonia molecule by converting glutamine to glutamate. PurL transfers the ammonia molecule to FGAR to form FGAM in an ATP-dependent manner. PurS interacts with PurQ and PurL and is thought to assist in the transfer of the ammonia molecule from PurQ to PurL. The polypeptide is Phosphoribosylformylglycinamidine synthase subunit PurL (Metallosphaera sedula (strain ATCC 51363 / DSM 5348 / JCM 9185 / NBRC 15509 / TH2)).